An 885-amino-acid polypeptide reads, in one-letter code: Alanine--tRNA ligase (885 aa).

Zn(2+)-binding residues include histidine 574, histidine 578, cysteine 676, and histidine 680.

It belongs to the class-II aminoacyl-tRNA synthetase family. Zn(2+) is required as a cofactor.

It is found in the cytoplasm. The catalysed reaction is tRNA(Ala) + L-alanine + ATP = L-alanyl-tRNA(Ala) + AMP + diphosphate. In terms of biological role, catalyzes the attachment of alanine to tRNA(Ala) in a two-step reaction: alanine is first activated by ATP to form Ala-AMP and then transferred to the acceptor end of tRNA(Ala). Also edits incorrectly charged Ser-tRNA(Ala) and Gly-tRNA(Ala) via its editing domain. This is Alanine--tRNA ligase from Syntrophobacter fumaroxidans (strain DSM 10017 / MPOB).